Consider the following 805-residue polypeptide: Angiotensin-converting enzyme 2 (805 aa).

Positions 1–17 are cleaved as a signal peptide; that stretch reads MSSSSWLLLSLVAVTAA. At 18 to 740 the chain is on the extracellular side; sequence QSTIEEQAKT…LGPPNQPPVS (723 aa). Residues 19–607 enclose the Peptidase M2 domain; sequence STIEEQAKTF…QNKNSFVGWS (589 aa). The interaction with SARS-CoV spike glycoprotein stretch occupies residues 30-41; the sequence is DKFNHEAEDLFY. Asn-53 is a glycosylation site (N-linked (GlcNAc...) asparagine). The tract at residues 82–84 is interaction with SARS-CoV spike glycoprotein; that stretch reads MYP. Asn-90 and Asn-103 each carry an N-linked (GlcNAc...) asparagine glycan. A disulfide bridge links Cys-133 with Cys-141. Residue Arg-169 coordinates chloride. Substrate is bound at residue Arg-273. A glycan (N-linked (GlcNAc...) asparagine) is linked at Asn-322. A disulfide bond links Cys-344 and Cys-361. 345–346 is a binding site for substrate; it reads HP. The tract at residues 353-357 is interaction with SARS-CoV spike glycoprotein; sequence KGDFR. His-374 is a binding site for Zn(2+). Glu-375 serves as the catalytic Proton acceptor. Zn(2+) is bound by residues His-378 and Glu-402. N-linked (GlcNAc...) asparagine glycosylation occurs at Asn-432. The chloride site is built by Trp-477 and Lys-481. The Proton donor role is filled by His-505. Position 515 (Tyr-515) interacts with substrate. The cysteines at positions 530 and 542 are disulfide-linked. The N-linked (GlcNAc...) asparagine glycan is linked to Asn-546. The Collectrin-like domain occupies 614 to 805; the sequence is ADQSIKVRIS…QNTDDVQTSF (192 aa). The tract at residues 652-659 is essential for cleavage by ADAM17; sequence RQYFLKVK. Asn-690 is a glycosylation site (N-linked (GlcNAc...) asparagine). The interval 697–716 is essential for cleavage by TMPRSS11D and TMPRSS2; the sequence is RTEVEKAIRMSRSRINDAFR. The chain crosses the membrane as a helical span at residues 741–761; the sequence is IWLIVFGVVMGVIVVGIVILI. Topologically, residues 762 to 805 are cytoplasmic; the sequence is FTGIRDRKKKNKARSGENPYASIDISKGENNPGFQNTDDVQTSF. The segment at 772–805 is disordered; that stretch reads NKARSGENPYASIDISKGENNPGFQNTDDVQTSF. An LIR motif is present at residues 778-786; that stretch reads ENPYASIDI. A Phosphotyrosine modification is found at Tyr-781. The Endocytic sorting signal signature appears at 781–784; it reads YASI. The short motif at 781–785 is the SH2-binding element; sequence YASID. Ser-783 is subject to Phosphoserine. Residue Lys-788 forms a Glycyl lysine isopeptide (Lys-Gly) (interchain with G-Cter in ubiquitin) linkage. Positions 789-805 are enriched in polar residues; it reads GENNPGFQNTDDVQTSF. The short motif at 792-795 is the PTB element; it reads NPGF. The PDZ-binding signature appears at 803-805; that stretch reads TSF.

The protein belongs to the peptidase M2 family. Homodimer. Interacts with the catalytically active form of TMPRSS2. Interacts with SLC6A19; this interaction is essential for expression and function of SLC6A19 in intestine. Interacts with ITGA5:ITGB1. Probably interacts (via endocytic sorting signal motif) with AP2M1; the interaction is inhibited by phosphorylation of Tyr-781. Interacts (via PDZ-binding motif) with NHERF1 (via PDZ domains); the interaction may enhance ACE2 membrane residence. In terms of assembly, (Microbial infection) Interacts with SARS coronavirus/SARS-CoV spike protein. As to quaternary structure, (Microbial infection) Interacts with SARS coronavirus-2/SARS-CoV-2 spike protein (via RBD domain). (Microbial infection) Interacts with human coronavirus NL63 spike protein. In terms of assembly, (Microbial infection) Interacts with human coronavirus NL63/HCoV-NL63 spike glycoprotein. As to quaternary structure, (Microbial infection) Interacts with SARS coronavirus-2/SARS-CoV-2 spike protein; the interaction is increased by AVP/Arg-vasopressin with which they may form a complex. It depends on Zn(2+) as a cofactor. Chloride serves as cofactor. In terms of processing, N-glycosylation on Asn-90 may limit SARS infectivity. Post-translationally, proteolytic cleavage by ADAM17 generates a secreted form. Also cleaved by serine proteases: TMPRSS2, TMPRSS11D and HPN/TMPRSS1. Phosphorylated. Phosphorylation at Tyr-781 probably inhibits interaction with AP2M1 and enables interactions with proteins containing SH2 domains. In terms of processing, ubiquitinated. Ubiquitinated on Lys-788 via 'Lys-48'-linked ubiquitin. 'Lys-48'-linked deubiquitinated by USP50 on the Lys-788; leading to its stabilization. In terms of tissue distribution, expressed in endothelial cells from small and large arteries, and in arterial smooth muscle cells (at protein level). Expressed in enterocytes of the small intestine, Leydig cells and Sertoli cells (at protein level). Expressed in the renal proximal tubule and the small intestine (at protein level). Expressed in heart, kidney, testis, and gastrointestinal system (at protein level). In lung, expressed at low levels in some alveolar type 2 cells, the expression seems to be individual-specific (at protein level). Expressed in nasal epithelial cells (at protein level). Coexpressed with TMPRSS2 within some lung alveolar type 2 cells, ileal absorptive enterocytes, intestinal epithelial cells, cornea, gallbladder and nasal goblet secretory cells. Coexpressed with TMPRSS4 within mature enterocytes. As to expression, expressed in nasal and bronchial epithelial cells (at protein level).

Its subcellular location is the secreted. It localises to the cell membrane. The protein resides in the cytoplasm. The protein localises to the cell projection. It is found in the cilium. Its subcellular location is the apical cell membrane. The catalysed reaction is angiotensin II + H2O = angiotensin-(1-7) + L-phenylalanine. It catalyses the reaction angiotensin I + H2O = angiotensin-(1-9) + L-leucine. It carries out the reaction bradykinin(1-8) + H2O = bradykinin(1-7) + L-phenylalanine. The enzyme catalyses neurotensin + H2O = neurotensin-(1-12) + L-leucine. The catalysed reaction is neurotensin-(1-8) + H2O = neurotensin-(1-7) + L-arginine. It catalyses the reaction kinetensin + H2O = kinetensin-(1-8) + L-leucine. It carries out the reaction dynorphin A-(1-13) + H2O = dynorphin A-(1-12) + L-lysine. The enzyme catalyses apelin-13 + H2O = apelin-12 + L-phenylalanine. The catalysed reaction is [Pyr1]apelin-13 + H2O = [Pyr1]apelin-12 + L-phenylalanine. It catalyses the reaction apelin-17 + H2O = apelin-16 + L-phenylalanine. It carries out the reaction beta-casomorphin-7 + H2O = beta-casomorphin-6 + L-isoleucine. The enzyme catalyses neocasomorphin + H2O = neocasomorphin-(1-5) + L-isoleucine. With respect to regulation, regulated by chloride and fluoride, but not bromide. Chloride increases angiotensin I and decreases angiotensin II cleavage. Inhibited by MLN-4760, cFP_Leu, and EDTA, but not by the ACE inhibitors lisinopril, captopril and enalaprilat. Highly potent and selective in vitro ACE2 inhibitors were identified. Functionally, essential counter-regulatory carboxypeptidase of the renin-angiotensin hormone system that is a critical regulator of blood volume, systemic vascular resistance, and thus cardiovascular homeostasis. Converts angiotensin I to angiotensin 1-9, a nine-amino acid peptide with anti-hypertrophic effects in cardiomyocytes, and angiotensin II to angiotensin 1-7, which then acts as a beneficial vasodilator and anti-proliferation agent, counterbalancing the actions of the vasoconstrictor angiotensin II. Also removes the C-terminal residue from three other vasoactive peptides, neurotensin, kinetensin, and des-Arg bradykinin, but is not active on bradykinin. Also cleaves other biological peptides, such as apelins (apelin-13, [Pyr1]apelin-13, apelin-17, apelin-36), casomorphins (beta-casomorphin-7, neocasomorphin) and dynorphin A with high efficiency. In addition, ACE2 C-terminus is homologous to collectrin and is responsible for the trafficking of the neutral amino acid transporter SL6A19 to the plasma membrane of gut epithelial cells via direct interaction, regulating its expression on the cell surface and its catalytic activity. Its function is as follows. (Microbial infection) Acts as a receptor for human coronaviruses SARS-CoV and SARS-CoV-2, as well as human coronavirus NL63/HCoV-NL63. In terms of biological role, non-functional as a carboxypeptidase. (Microbial infection) Non-functional as a receptor for human coronavirus SARS-CoV-2. This Homo sapiens (Human) protein is Angiotensin-converting enzyme 2.